The chain runs to 340 residues: Phosphoribosylformylglycinamidine cyclo-ligase (340 aa).

The protein belongs to the AIR synthase family.

Its subcellular location is the cytoplasm. It carries out the reaction 2-formamido-N(1)-(5-O-phospho-beta-D-ribosyl)acetamidine + ATP = 5-amino-1-(5-phospho-beta-D-ribosyl)imidazole + ADP + phosphate + H(+). The protein operates within purine metabolism; IMP biosynthesis via de novo pathway; 5-amino-1-(5-phospho-D-ribosyl)imidazole from N(2)-formyl-N(1)-(5-phospho-D-ribosyl)glycinamide: step 2/2. The polypeptide is Phosphoribosylformylglycinamidine cyclo-ligase (Streptococcus pyogenes serotype M2 (strain MGAS10270)).